The following is a 44-amino-acid chain: uncharacterized protein (44 aa).

A helical transmembrane segment spans residues 19 to 39 (AVGFVVSFGFFAFLFVMATVI).

It localises to the cell membrane. This is an uncharacterized protein from Bacillus subtilis (strain 168).